Here is a 192-residue protein sequence, read N- to C-terminus: Ribosome maturation factor RimM (192 aa).

A PRC barrel domain is found at 99–186; the sequence is ADEYHVSELV…RIEIAPPPGL (88 aa).

It belongs to the RimM family. As to quaternary structure, binds ribosomal protein uS19.

Its subcellular location is the cytoplasm. An accessory protein needed during the final step in the assembly of 30S ribosomal subunit, possibly for assembly of the head region. Essential for efficient processing of 16S rRNA. May be needed both before and after RbfA during the maturation of 16S rRNA. It has affinity for free ribosomal 30S subunits but not for 70S ribosomes. In Microcystis aeruginosa (strain NIES-843 / IAM M-2473), this protein is Ribosome maturation factor RimM.